Here is a 100-residue protein sequence, read N- to C-terminus: Aspartyl/glutamyl-tRNA(Asn/Gln) amidotransferase subunit C (100 aa).

The protein belongs to the GatC family. As to quaternary structure, heterotrimer of A, B and C subunits.

The enzyme catalyses L-glutamyl-tRNA(Gln) + L-glutamine + ATP + H2O = L-glutaminyl-tRNA(Gln) + L-glutamate + ADP + phosphate + H(+). It carries out the reaction L-aspartyl-tRNA(Asn) + L-glutamine + ATP + H2O = L-asparaginyl-tRNA(Asn) + L-glutamate + ADP + phosphate + 2 H(+). Functionally, allows the formation of correctly charged Asn-tRNA(Asn) or Gln-tRNA(Gln) through the transamidation of misacylated Asp-tRNA(Asn) or Glu-tRNA(Gln) in organisms which lack either or both of asparaginyl-tRNA or glutaminyl-tRNA synthetases. The reaction takes place in the presence of glutamine and ATP through an activated phospho-Asp-tRNA(Asn) or phospho-Glu-tRNA(Gln). The polypeptide is Aspartyl/glutamyl-tRNA(Asn/Gln) amidotransferase subunit C (Streptococcus pneumoniae (strain Hungary19A-6)).